The primary structure comprises 422 residues: Structural polyprotein (422 aa).

Topologically, residues 1 to 359 (SVTEHFNVYK…WPHEIIQYYY (359 aa)) are extracellular. 2 N-linked (GlcNAc...) asparagine; by host glycosylation sites follow: Asn200 and Asn262. A helical membrane pass occupies residues 360-382 (GLYPAATIAAVSGXSLMALLTLA). The Cytoplasmic segment spans residues 383–422 (ATCCMLATARRKCLTPYALTPGAVVPLTLGLXXCAPRANA). S-palmitoyl cysteine; by host attachment occurs at residues Cys385, Cys395, and Cys416. Residues 395-415 (CLTPYALTPGAVVPLTLGLXX) form a transient transmembrane before p62-6K protein processing region.

As to quaternary structure, spike glycoprotein E2: Processing of the precursor of protein E3/E2 into E2 and E3 results in a heterodimer of the spike glycoproteins E2 and E1. Spike glycoprotein E2: Spike at virion surface are constituted of three E2-E1 heterodimers. Spike glycoprotein E2: Interacts with 6K protein. Post-translationally, structural polyprotein: Specific enzymatic cleavages in vivo yield mature proteins. Capsid protein is auto-cleaved during polyprotein translation, unmasking a signal peptide at the N-terminus of the precursor of E3/E2. The remaining polyprotein is then targeted to the host endoplasmic reticulum, where host signal peptidase cleaves it into pE2, 6K and E1 proteins. pE2 is further processed to mature E3 and E2 by host furin in trans-Golgi vesicle. In terms of processing, spike glycoprotein E2: Palmitoylated via thioester bonds. These palmitoylations may induce disruption of the C-terminus transmembrane. This would result in the reorientation of E2 C-terminus from lumenal to cytoplasmic side. Spike glycoprotein E2: N-glycosylated.

Its subcellular location is the virion membrane. The protein resides in the host cell membrane. In terms of biological role, spike glycoprotein E2: Plays a role in viral attachment to target host cell, by binding to the cell receptor. Synthesized as a p62 precursor which is processed by furin at the cell membrane just before virion budding, giving rise to E2-E1 heterodimer. The p62-E1 heterodimer is stable, whereas E2-E1 is unstable and dissociate at low pH. p62 is processed at the last step, presumably to avoid E1 fusion activation before its final export to cell surface. E2 C-terminus contains a transitory transmembrane that would be disrupted by palmitoylation, resulting in reorientation of the C-terminal tail from lumenal to cytoplasmic side. This step is critical since E2 C-terminus is involved in budding by interacting with capsid proteins. This release of E2 C-terminus in cytoplasm occurs lately in protein export, and precludes premature assembly of particles at the endoplasmic reticulum membrane. The protein is Structural polyprotein of Ross river virus (strain 213970) (RRV).